We begin with the raw amino-acid sequence, 58 residues long: Curromycin resistance protein (58 aa).

The segment at 1 to 37 (MSVVALGATSITPPHGPESQGRPFPARGPVRPSARAR) is disordered. Residues 25 to 37 (PARGPVRPSARAR) are compositionally biased toward low complexity.

This is Curromycin resistance protein (cre) from Streptomyces hygroscopicus.